Here is a 130-residue protein sequence, read N- to C-terminus: MIGNWNYGTGRRKSAVARVFIKAGKGDIVVNGKPISDYFSRETSLMIVRQPLELTNHAQTFDIKVNVSGGGETGQAGAVRHGITRALIDYDATLKPALSNAGFVTRDAREVERKKVGLHKARRAKQFSKR.

It belongs to the universal ribosomal protein uS9 family.

The protein is Small ribosomal subunit protein uS9 of Burkholderia mallei (strain NCTC 10247).